The sequence spans 397 residues: Cercosporin biosynthesis regulatory protein CTB8 (397 aa).

The zn(2)-C6 fungal-type DNA-binding region spans 26–53 (CTHCSSQKIRCTKERPACARCVNKGLLC). Disordered stretches follow at residues 62–92 (GTRRHSVRATPEPETTISNAPTSSVPPDSVK) and 173–198 (AEASTRPSSSSSPPSQRSDGGRATTH). Residues 74-87 (PETTISNAPTSSVP) are compositionally biased toward polar residues. Residues 179–197 (PSSSSSPPSQRSDGGRATT) show a composition bias toward low complexity.

It is found in the nucleus. Its function is as follows. Transcription regulator of the gene cluster that mediates the biosynthesis of cercosporin, a light-activated, non-host-selective toxin. The perylenequinone chromophore of cercosporin absorbs light energy to attain an electronically-activated triplet state and produces active oxygen species such as the hydroxyl radical, superoxide, hydrogen peroxide or singlet oxygen upon reaction with oxygen molecules. These reactive oxygen species cause damage to various cellular components including lipids, proteins and nucleic acids. The sequence is that of Cercosporin biosynthesis regulatory protein CTB8 from Cercospora nicotianae (Barn spot disease fungus).